Reading from the N-terminus, the 479-residue chain is Adenosylhomocysteinase (479 aa).

The substrate site is built by T66, D142, and E203. 204 to 206 serves as a coordination point for NAD(+); that stretch reads TTT. The substrate site is built by K233 and D237. NAD(+) contacts are provided by residues N238, 267-272, E290, N325, 346-348, and N394; these read GYGDVG and IGH.

The protein belongs to the adenosylhomocysteinase family. It depends on NAD(+) as a cofactor.

It localises to the cytoplasm. The enzyme catalyses S-adenosyl-L-homocysteine + H2O = L-homocysteine + adenosine. The protein operates within amino-acid biosynthesis; L-homocysteine biosynthesis; L-homocysteine from S-adenosyl-L-homocysteine: step 1/1. May play a key role in the regulation of the intracellular concentration of adenosylhomocysteine. The polypeptide is Adenosylhomocysteinase (Oleidesulfovibrio alaskensis (strain ATCC BAA-1058 / DSM 17464 / G20) (Desulfovibrio alaskensis)).